Consider the following 366-residue polypeptide: Peptide chain release factor 2 (366 aa).

Q246 is subject to N5-methylglutamine.

Belongs to the prokaryotic/mitochondrial release factor family. Post-translationally, methylated by PrmC. Methylation increases the termination efficiency of RF2.

It localises to the cytoplasm. In terms of biological role, peptide chain release factor 2 directs the termination of translation in response to the peptide chain termination codons UGA and UAA. The polypeptide is Peptide chain release factor 2 (Frankia casuarinae (strain DSM 45818 / CECT 9043 / HFP020203 / CcI3)).